A 7094-amino-acid chain; its full sequence is Replicase polyprotein 1ab (7094 aa).

In terms of domain architecture, CoV Nsp1 globular spans 54-196 (PENHVMVDCR…PWVMYLRKCG (143 aa)). In terms of domain architecture, BetaCoV Nsp1 C-terminal spans 216 to 246 (FKVEDAYDLVHDEPKGKFSKKAYALIRGYRG). Positions 250–519 (LLYVDQYGCD…LICKALYLDY (270 aa)) constitute a CoV Nsp2 N-terminal domain. Cys392, Cys397, Cys413, and Cys416 together coordinate Zn(2+). The segment at 392–416 (CEQDLCDFKGWVPGNMIDGFACTTC) is C4. The 190-residue stretch at 524 to 713 (CGNLHQRELL…AQAFRSVAKV (190 aa)) folds into the CoV Nsp2 middle domain. The CoV Nsp2 C-terminal domain maps to 733–851 (RRRICLSGSK…LDQAWRVPCA (119 aa)). A Ubiquitin-like 1 domain is found at 853–966 (RCVTFKEQPT…LYCAFTAPED (114 aa)). Acidic residues predominate over residues 972-986 (ESGVEEDDVEGEETD). The tract at residues 972-992 (ESGVEEDDVEGEETDLTVTSA) is disordered. Positions 1036 to 1274 (DLESVIQDYE…IAQLYGSCIT (239 aa)) constitute a Peptidase C16 1 domain. Cys1074 serves as the catalytic For PL1-PRO activity. 4 residues coordinate Zn(2+): Cys1151, Cys1154, Cys1177, and Cys1179. The C4-type 1 zinc finger occupies 1151–1179 (CIKCDLALKLKGLDAMFFYGDVVSHVCKC). Residues His1225 and Asp1236 each act as for PL1-PRO activity in the active site. In terms of domain architecture, Macro spans 1275–1435 (PNVCFVKGDI…LISKCQITAV (161 aa)). Residues 1491–1563 (DDARTFVQSN…VAQIKALFLD (73 aa)) form the DPUP domain. The Ubiquitin-like 2 domain occupies 1562–1617 (LDKVDILLTVDGVNFTNRFVPVGESFGKSLGNVFCDGVNVTKHKCDINYKGKVFFQ). The Peptidase C16 2 domain occupies 1631–1892 (SSFNFDQKEL…KIEYKPDLSQ (262 aa)). Cys1671 (for PL2-PRO activity) is an active-site residue. Zn(2+) contacts are provided by Cys1749, Cys1751, Cys1783, and Cys1785. The segment at 1749-1785 (CKCGVKQEQRTGVDAVMHFGTLSREDLEIGYTVDCSC) adopts a C4-type 2 zinc-finger fold. Residues His1828 and Asp1842 each act as for PL2-PRO activity in the active site. Residues 1906-2007 (IKAQFKTFEK…TYFNRPLLVD (102 aa)) enclose the Nucleic acid-binding domain. Positions 2020–2169 (DDGGDISESD…ADNKVIYTTE (150 aa)) constitute a G2M domain. The next 3 membrane-spanning stretches (helical) occupy residues 2138 to 2158 (ISAC…WIKI), 2199 to 2219 (ACII…NVIF), and 2221 to 2241 (DFYL…AQWI). The tract at residues 2138–2385 (ISACFNFIKW…ASFIKLFSLF (248 aa)) is HD1. A 3Ecto domain is found at 2235 to 2296 (GKIAQWIKNT…AIDVVQYEAD (62 aa)). 2 disulfides stabilise this stretch: Cys2251–Cys2275 and Cys2266–Cys2272. The next 3 helical transmembrane spans lie at 2313 to 2333 (LIVS…LISI), 2343 to 2363 (LFML…ANML), and 2365 to 2385 (AHVF…FSLF). A Y1 region spans residues 2383-2473 (SLFRHVAYGC…ELKRPIQPTD (91 aa)). Positions 2383 to 2750 (SLFRHVAYGC…LTTPFSLKGG (368 aa)) constitute a CoV Nsp3 Y domain. Zn(2+) is bound by residues His2387, Cys2392, Cys2397, Cys2400, Cys2433, His2436, Cys2440, and Cys2443. The ZF1 stretch occupies residues 2387–2400 (HVAYGCSKSGCLFC). The tract at residues 2433–2443 (CSKHQWNCIDC) is ZF2. Residues 2474–2566 (VAYHTVTDVK…MVDKNLITTA (93 aa)) form a Y2 region. The segment at 2474 to 2750 (VAYHTVTDVK…LTTPFSLKGG (277 aa)) is coV-Y. The tract at residues 2567 to 2649 (NTGTSVTETM…DSVMSAVSAG (83 aa)) is Y3. A Y4 region spans residues 2650–2750 (LELTDESCNN…LTTPFSLKGG (101 aa)). Helical transmembrane passes span 2752–2772 (VFSY…IGLW), 3031–3051 (ASSI…YYLI), 3063–3083 (IVFV…VFQV), 3090–3110 (VYAI…SVIM), and 3115–3135 (LVMY…SVVV). The HD2 stretch occupies residues 2752-3135 (VFSYFVYVCF…FCLLYISVVV (384 aa)). Residues 3149–3246 (LGTSVRSDGT…TASVSTSFLQ (98 aa)) enclose the Nsp4C domain. The region spanning 3247 to 3549 (SGIVKMVNPT…YQQLAGIKLQ (303 aa)) is the Peptidase C30 domain. Active-site for 3CL-PRO activity residues include His3287 and Cys3391. 7 helical membrane passes run 3558-3578 (GIVC…TAFV), 3588-3608 (TNML…MLLV), 3615-3635 (LTMY…LVVY), 3657-3677 (TYTD…FVTL), 3684-3704 (LFSF…WYMG), 3711-3731 (ILLM…LSMA), and 3755-3775 (IVLV…GLFS). The tract at residues 3558-3775 (GIVCWIMAST…IISCYWGLFS (218 aa)) is HD3. The RdRp Nsp7 cofactor domain occupies 3837–3925 (SKLTDVKCAN…DYAKDNTVLQ (89 aa)). Residues 3926-4122 (ALQSEFVNMA…HNEVSATALQ (197 aa)) enclose the RdRp Nsp8 cofactor domain. Residues 4123–4232 (NNELMPAKLK…GTISSTVRLQ (110 aa)) form the Nsp9 ssRNA-binding domain. Residues 4233-4370 (AGTATEYASN…CVSTDTTVQS (138 aa)) enclose the ExoN/MTase coactivator domain. Residues Cys4306, Cys4309, His4315, Cys4322, Cys4348, Cys4351, Cys4359, and Cys4361 each coordinate Zn(2+). Zinc fingers lie at residues 4306–4322 (CIYC…DGLC) and 4348–4361 (CQVC…SCSC). The NiRAN domain maps to 4375–4630 (FLNRVRGTSV…DCELYVNNAY (256 aa)). Asn4578 and Asp4587 together coordinate Mn(2+). Positions 4631–4729 (RLFDLVQYDF…MNMDVDTHRY (99 aa)) constitute a Nsp12 Interface domain. Positions 4660, 4666, 4671, 4675, and 4852 each coordinate Zn(2+). Residues 4730-5297 (RLSLKDLLLY…NMYLRSAVMQ (568 aa)) enclose the Nsp12 RNA-dependent RNA polymerase domain. The rdRp Fingers N-ter stretch occupies residues 4732–4946 (SLKDLLLYAA…HQKCLKSIAA (215 aa)). The segment at 4947-4985 (TRGVPVVIGTTKFYGGWDDMLRRLIKDVDNPVLMGWDYP) is rdRp Palm N-ter. One can recognise a RdRp catalytic domain in the interval 4977–5139 (PVLMGWDYPK…CYNSDYASKG (163 aa)). The segment at 4986-5044 (KCDRAMPNILRIVSSLVLARKHEACCSQSDRFYRLANEYAQVLSEIVMCGGCYYVKPGG) is rdRp Fingers C-ter. Zn(2+) contacts are provided by His5007, Cys5010, and Cys5011. Positions 5045 to 5180 (TSSGDATTAF…NNGPHEFCSQ (136 aa)) are rdRp Palm C-ter. Residues Ser5124, Asp5125, and Asp5126 contribute to the active site. The interval 5181-5297 (HTMLVKMDGD…NMYLRSAVMQ (117 aa)) is rdRp Thumb. The 113-residue stretch at 5298–5410 (SVGACVVCSS…DDFNRIASCK (113 aa)) folds into the CV ZBD domain. Residues Cys5302, Cys5305, Cys5313, Cys5316, Cys5323, Cys5326, His5330, His5336, Cys5347, Cys5352, Cys5369, and His5372 each contribute to the Zn(2+) site. The 182-residue stretch at 5553 to 5734 (SVLETFQNNV…MCCLGPDIFL (182 aa)) folds into the (+)RNA virus helicase ATP-binding domain. 5578 to 5585 (GPPGTGKS) lines the ATP pocket. Positions 5735 to 5904 (GTCYRCPKEI…VETRVQCSTN (170 aa)) constitute a (+)RNA virus helicase C-terminal domain. Positions 5971–6186 (LFITKEEAVK…RCLAVYDCFC (216 aa)) constitute an ExoN domain. Residues Asp5989, Glu5991, and Glu6090 contribute to the active site. Zn(2+) is bound by residues Cys6106, Cys6109, Cys6125, His6128, His6156, Cys6160, and His6163. Active-site residues include His6167 and Asp6172. Zn(2+) is bound at residue Cys6178. Residues 6195 to 6421 (YPIISNELSI…NLWNTFTKLQ (227 aa)) form the N7-MTase domain. 6230–6236 (DIGNPKA) lines the S-adenosyl-L-methionine pocket. Residues 6308-6322 (CNGGSLYVNKHAFHT) are gpppA-binding. Zn(2+)-binding residues include Cys6346, Cys6367, Cys6378, and His6381. Residues 6422 to 6482 (SLENVVYNLV…NVAVELFAKR (61 aa)) form the Nsp15 N-terminal oligomerization domain. The region spanning 6483–6603 (SIRHHPELKL…FAVRKEGQDV (121 aa)) is the AV-Nsp11N/CoV-Nsp15M domain. The 140-residue stretch at 6653 to 6792 (TCRTDMEKDF…NDEKVMTFYL (140 aa)) folds into the NendoU domain. Residues His6683, His6698, Lys6738, Lys6841, Asp6925, Lys6965, and Glu6998 contribute to the active site. Residues 6797 to 7091 (ASDWKPGYSM…KEVFVGDSMV (295 aa)) enclose the Nidovirus-type SAM-dependent 2'-O-MTase domain.

The protein belongs to the coronaviruses polyprotein 1ab family. In terms of assembly, interacts with host PHB and PHB2. Interacts with papain-like protease nsp3 and non-structural protein 6. As to quaternary structure, monomer. Homodimer. Only the homodimer shows catalytic activity. In terms of assembly, interacts with nsp8 and nsp12 to form the replication-transcription complex (RTC): nsp12, nsp7, two subunits of nsp8, and up to two subunits of nsp13. Interacts with nsp7, nsp13 and nsp12 to form the replication-transcription complex (RTC): nsp12, nsp7, two subunits of nsp8, and up to two subunits of nsp13. As to quaternary structure, interacts with nsp12. In terms of assembly, interacts with proofreading exoribonuclease nsp14 and 2'-O-methyltransferase nsp16; these interactions enhance nsp14 and nsp16 enzymatic activities. Interacts with nsp7 and nsp8 to form the replication-transcription complex (RTC): nsp12, nsp7, two subunits of nsp8, and up to two subunits of nsp13. Interacts with nsp9. As to quaternary structure, interacts with nsp8 to form the replication-transcription complex (RTC): nsp12, nsp7, two subunits of nsp8, and up to two subunits of nsp13. It depends on Mn(2+) as a cofactor. The cofactor is Mg(2+). Specific enzymatic cleavages in vivo by its own proteases yield mature proteins. 3CL-PRO and PL-PRO proteinases are autocatalytically processed.

The protein localises to the host membrane. Its subcellular location is the host cytoplasm. It localises to the host perinuclear region. The protein resides in the host endoplasmic reticulum-Golgi intermediate compartment. The enzyme catalyses RNA(n) + a ribonucleoside 5'-triphosphate = RNA(n+1) + diphosphate. The catalysed reaction is ATP + H2O = ADP + phosphate + H(+). It carries out the reaction Thiol-dependent hydrolysis of ester, thioester, amide, peptide and isopeptide bonds formed by the C-terminal Gly of ubiquitin (a 76-residue protein attached to proteins as an intracellular targeting signal).. It catalyses the reaction a 5'-end (N(7)-methyl 5'-triphosphoguanosine)-ribonucleoside in mRNA + S-adenosyl-L-methionine = a 5'-end (N(7)-methyl 5'-triphosphoguanosine)-(2'-O-methyl-ribonucleoside) in mRNA + S-adenosyl-L-homocysteine + H(+). The enzyme catalyses uridylyl-uridylyl-ribonucleotide-RNA = a 3'-end uridylyl-2',3'-cyclophospho-uridine-RNA + a 5'-end dephospho-ribonucleoside-RNA. The catalysed reaction is a 5'-end diphospho-ribonucleoside in mRNA + GTP + H(+) = a 5'-end (5'-triphosphoguanosine)-ribonucleoside in mRNA + diphosphate. It carries out the reaction a 5'-end (5'-triphosphoguanosine)-ribonucleoside in mRNA + S-adenosyl-L-methionine = a 5'-end (N(7)-methyl 5'-triphosphoguanosine)-ribonucleoside in mRNA + S-adenosyl-L-homocysteine. Functionally, the replicase polyprotein of coronaviruses is a multifunctional protein: it contains the activities necessary for the transcription of negative stranded RNA, leader RNA, subgenomic mRNAs and progeny virion RNA as well as proteinases responsible for the cleavage of the polyprotein into functional products. In terms of biological role, inhibits host translation by interacting with the 40S ribosomal subunit. The nsp1-40S ribosome complex further induces an endonucleolytic cleavage near the 5'UTR of host mRNAs, targeting them for degradation. Viral mRNAs are not susceptible to nsp1-mediated endonucleolytic RNA cleavage thanks to the presence of a 5'-end leader sequence and are therefore protected from degradation. By suppressing host gene expression, nsp1 facilitates efficient viral gene expression in infected cells and evasion from host immune response. Its function is as follows. May play a role in the modulation of host cell survival signaling pathway by interacting with host PHB and PHB2. Indeed, these two proteins play a role in maintaining the functional integrity of the mitochondria and protecting cells from various stresses. Responsible for the cleavages located at the N-terminus of the replicase polyprotein. In addition, PL-PRO possesses a deubiquitinating/deISGylating activity and processes both 'Lys-48'- and 'Lys-63'-linked polyubiquitin chains from cellular substrates. Participates together with nsp4 in the assembly of virally-induced cytoplasmic double-membrane vesicles necessary for viral replication. Antagonizes innate immune induction of type I interferon by blocking the phosphorylation, dimerization and subsequent nuclear translocation of host IRF3. Also prevents host NF-kappa-B signaling. Functionally, participates in the assembly of virally-induced cytoplasmic double-membrane vesicles necessary for viral replication. In terms of biological role, cleaves the C-terminus of replicase polyprotein at 11 sites. Recognizes substrates containing the core sequence [ILMVF]-Q-|-[SGACN]. Also able to bind an ADP-ribose-1''-phosphate (ADRP). Its function is as follows. Plays a role in the initial induction of autophagosomes from host endoplasmic reticulum. Later, limits the expansion of these phagosomes that are no longer able to deliver viral components to lysosomes. Forms a hexadecamer with nsp8 (8 subunits of each) that may participate in viral replication by acting as a primase. Alternatively, may synthesize substantially longer products than oligonucleotide primers. Functionally, forms a hexadecamer with nsp7 (8 subunits of each) that may participate in viral replication by acting as a primase. Alternatively, may synthesize substantially longer products than oligonucleotide primers. In terms of biological role, forms a primer, NSP9-pU, which is utilized by the polymerase for the initiation of RNA chains. Interacts with ribosome signal recognition particle RNA (SRP). Together with NSP8, suppress protein integration into the cell membrane, thereby disrupting host immune defenses. Its function is as follows. Plays a pivotal role in viral transcription by stimulating both nsp14 3'-5' exoribonuclease and nsp16 2'-O-methyltransferase activities. Therefore plays an essential role in viral mRNAs cap methylation. RNA-directed RNA polymerase that catalyzes the transcription of viral genomic and subgenomic RNAs. Acts in complex with nsp7 and nsp8 to transcribe both the minus and positive strands of genomic RNA. The kinase-like NiRAN domain of NSP12 attaches one or more nucleotides to the amino terminus of NSP9, forming a covalent RNA-protein intermediate that serves as transcription/replication primer. Subgenomic RNAs (sgRNAs) are formed by discontinuous transcription: The polymerase has the ability to pause at transcription-regulating sequences (TRS) and jump to the leader TRS, resulting in a major deletion. This creates a series of subgenomic RNAs that are replicated, transcribed and translated. In addition, Nsp12 is a subunit of the viral RNA capping enzyme that catalyzes the RNA guanylyltransferase reaction for genomic and sub-genomic RNAs. Subsequently, the NiRAN domain transfers RNA to GDP, and forms the core cap structure GpppA-RNA. Functionally, multi-functional protein with a zinc-binding domain in N-terminus displaying RNA and DNA duplex-unwinding activities with 5' to 3' polarity. Activity of helicase is dependent on magnesium. In terms of biological role, plays a role in viral RNA synthesis through two distinct activities. The N7-guanine methyltransferase activity plays a role in the formation of the cap structure GpppA-RNA. The proofreading exoribonuclease reduces the sensitivity of the virus to RNA mutagens during replication. This activity acts on both ssRNA and dsRNA in a 3'-5' direction. Its function is as follows. Plays a role in viral transcription/replication and prevents the simultaneous activation of host cell dsRNA sensors, such as MDA5/IFIH1, OAS, and PKR. Acts by degrading the 5'-polyuridines generated during replication of the poly(A) region of viral genomic and subgenomic RNAs. Catalyzes a two-step reaction in which a 2'3'-cyclic phosphate (2'3'-cP) is first generated by 2'-O transesterification, which is then hydrolyzed to a 3'-phosphate (3'-P). If not degraded, poly(U) RNA would hybridize with poly(A) RNA tails and activate host dsRNA sensors. Methyltransferase that mediates mRNA cap 2'-O-ribose methylation to the 5'-cap structure of viral mRNAs. N7-methyl guanosine cap is a prerequisite for binding of nsp16. Therefore plays an essential role in viral mRNAs cap methylation which is essential to evade immune system. The polypeptide is Replicase polyprotein 1ab (rep) (Bos taurus (Bovine)).